The following is a 347-amino-acid chain: NADH-quinone oxidoreductase subunit H (347 aa).

A run of 8 helical transmembrane segments spans residues 21–41, 87–107, 118–138, 157–177, 195–215, 258–278, 283–303, and 323–343; these read VAGI…IIYA, GLFL…WAVI, INVG…GVIL, AQMI…VLFA, GIVN…MFLI, NVLL…LPPI, LYAV…FFVF, and WKIF…YLML.

It belongs to the complex I subunit 1 family. As to quaternary structure, NDH-1 is composed of 14 different subunits. Subunits NuoA, H, J, K, L, M, N constitute the membrane sector of the complex.

The protein resides in the cell inner membrane. The enzyme catalyses a quinone + NADH + 5 H(+)(in) = a quinol + NAD(+) + 4 H(+)(out). Functionally, NDH-1 shuttles electrons from NADH, via FMN and iron-sulfur (Fe-S) centers, to quinones in the respiratory chain. The immediate electron acceptor for the enzyme in this species is believed to be ubiquinone. Couples the redox reaction to proton translocation (for every two electrons transferred, four hydrogen ions are translocated across the cytoplasmic membrane), and thus conserves the redox energy in a proton gradient. This subunit may bind ubiquinone. In Sphingopyxis alaskensis (strain DSM 13593 / LMG 18877 / RB2256) (Sphingomonas alaskensis), this protein is NADH-quinone oxidoreductase subunit H.